The chain runs to 312 residues: Protoheme IX farnesyltransferase 2 (312 aa).

The next 8 membrane-spanning stretches (helical) occupy residues 31-51, 52-72, 119-139, 152-172, 179-199, 225-245, 247-267, and 283-303; these read VMSL…GHIH, PVLG…SGAL, ALVN…YVVI, IVIG…AATG, LLLF…LALF, ILLY…LGYF, WVYG…AIEV, and LFAF…LDVV.

The protein belongs to the UbiA prenyltransferase family. Protoheme IX farnesyltransferase subfamily.

The protein resides in the cell inner membrane. It catalyses the reaction heme b + (2E,6E)-farnesyl diphosphate + H2O = Fe(II)-heme o + diphosphate. The protein operates within porphyrin-containing compound metabolism; heme O biosynthesis; heme O from protoheme: step 1/1. In terms of biological role, converts heme B (protoheme IX) to heme O by substitution of the vinyl group on carbon 2 of heme B porphyrin ring with a hydroxyethyl farnesyl side group. This is Protoheme IX farnesyltransferase 2 from Nitrobacter winogradskyi (strain ATCC 25391 / DSM 10237 / CIP 104748 / NCIMB 11846 / Nb-255).